The following is a 162-amino-acid chain: Crossover junction endodeoxyribonuclease RuvC (162 aa).

Active-site residues include D8, E69, and H141. Positions 8, 69, and 141 each coordinate Mg(2+).

Belongs to the RuvC family. As to quaternary structure, homodimer which binds Holliday junction (HJ) DNA. The HJ becomes 2-fold symmetrical on binding to RuvC with unstacked arms; it has a different conformation from HJ DNA in complex with RuvA. In the full resolvosome a probable DNA-RuvA(4)-RuvB(12)-RuvC(2) complex forms which resolves the HJ. Mg(2+) is required as a cofactor.

Its subcellular location is the cytoplasm. The catalysed reaction is Endonucleolytic cleavage at a junction such as a reciprocal single-stranded crossover between two homologous DNA duplexes (Holliday junction).. Functionally, the RuvA-RuvB-RuvC complex processes Holliday junction (HJ) DNA during genetic recombination and DNA repair. Endonuclease that resolves HJ intermediates. Cleaves cruciform DNA by making single-stranded nicks across the HJ at symmetrical positions within the homologous arms, yielding a 5'-phosphate and a 3'-hydroxyl group; requires a central core of homology in the junction. The consensus cleavage sequence is 5'-(A/T)TT(C/G)-3'. Cleavage occurs on the 3'-side of the TT dinucleotide at the point of strand exchange. HJ branch migration catalyzed by RuvA-RuvB allows RuvC to scan DNA until it finds its consensus sequence, where it cleaves and resolves the cruciform DNA. In Wolbachia pipientis wMel, this protein is Crossover junction endodeoxyribonuclease RuvC.